We begin with the raw amino-acid sequence, 325 residues long: L-lactate dehydrogenase 1 (325 aa).

Residues Val17, Asp38, Lys43, Tyr68, and 82–83 (GA) each bind NAD(+). Substrate-binding positions include Gln85, Arg91, and 123–126 (NPVD). Residues 121 to 123 (AAN) and Ser146 contribute to the NAD(+) site. 151–154 (DTAR) is a binding site for substrate. Beta-D-fructose 1,6-bisphosphate is bound by residues Arg156 and His171. The active-site Proton acceptor is His178. Tyr223 is modified (phosphotyrosine). Position 232 (Thr232) interacts with substrate.

This sequence belongs to the LDH/MDH superfamily. LDH family. Homotetramer.

The protein resides in the cytoplasm. The catalysed reaction is (S)-lactate + NAD(+) = pyruvate + NADH + H(+). Its pathway is fermentation; pyruvate fermentation to lactate; (S)-lactate from pyruvate: step 1/1. Allosterically activated by fructose 1,6-bisphosphate (FBP). In terms of biological role, catalyzes the conversion of lactate to pyruvate. The chain is L-lactate dehydrogenase 1 from Lactococcus lactis subsp. lactis (strain IL1403) (Streptococcus lactis).